A 143-amino-acid chain; its full sequence is Peptidyl-prolyl cis-trans isomerase FKBP15-3 (143 aa).

The 88-residue stretch at 56–143 (GKRVSVHYTG…VFDVELLNVK (88 aa)) folds into the PPIase FKBP-type domain.

It belongs to the FKBP-type PPIase family.

The catalysed reaction is [protein]-peptidylproline (omega=180) = [protein]-peptidylproline (omega=0). Its function is as follows. PPIases accelerate the folding of proteins. It catalyzes the cis-trans isomerization of proline imidic peptide bonds in oligopeptides. The chain is Peptidyl-prolyl cis-trans isomerase FKBP15-3 (FKBP15-3) from Arabidopsis thaliana (Mouse-ear cress).